The chain runs to 252 residues: Ribosomal RNA small subunit methyltransferase J (252 aa).

S-adenosyl-L-methionine-binding positions include 104–105, 120–121, 156–157, and D174; these read RD, ER, and SS.

It belongs to the methyltransferase superfamily. RsmJ family.

Its subcellular location is the cytoplasm. The catalysed reaction is guanosine(1516) in 16S rRNA + S-adenosyl-L-methionine = N(2)-methylguanosine(1516) in 16S rRNA + S-adenosyl-L-homocysteine + H(+). Functionally, specifically methylates the guanosine in position 1516 of 16S rRNA. This is Ribosomal RNA small subunit methyltransferase J from Yersinia enterocolitica serotype O:8 / biotype 1B (strain NCTC 13174 / 8081).